Consider the following 466-residue polypeptide: Cysteine--tRNA ligase (466 aa).

Cysteine 27 lines the Zn(2+) pocket. The 'HIGH' region signature appears at 29 to 39 (PTVYNYFHIGN). Zn(2+) is bound by residues cysteine 207, histidine 232, and glutamate 236. The 'KMSKS' region motif lies at 264-268 (KMSKS). Lysine 267 is a binding site for ATP.

Belongs to the class-I aminoacyl-tRNA synthetase family. As to quaternary structure, monomer. Requires Zn(2+) as cofactor.

Its subcellular location is the cytoplasm. It catalyses the reaction tRNA(Cys) + L-cysteine + ATP = L-cysteinyl-tRNA(Cys) + AMP + diphosphate. This chain is Cysteine--tRNA ligase, found in Clostridium novyi (strain NT).